Consider the following 1359-residue polypeptide: DNA-directed RNA polymerase subunit beta (1359 aa).

It belongs to the RNA polymerase beta chain family. In terms of assembly, the RNAP catalytic core consists of 2 alpha, 1 beta, 1 beta' and 1 omega subunit. When a sigma factor is associated with the core the holoenzyme is formed, which can initiate transcription.

The catalysed reaction is RNA(n) + a ribonucleoside 5'-triphosphate = RNA(n+1) + diphosphate. Functionally, DNA-dependent RNA polymerase catalyzes the transcription of DNA into RNA using the four ribonucleoside triphosphates as substrates. The protein is DNA-directed RNA polymerase subunit beta of Nitrosococcus oceani (strain ATCC 19707 / BCRC 17464 / JCM 30415 / NCIMB 11848 / C-107).